The sequence spans 502 residues: Probable glycine dehydrogenase (decarboxylating) subunit 2 (502 aa).

The residue at position 273 (Lys-273) is an N6-(pyridoxal phosphate)lysine.

It belongs to the GcvP family. C-terminal subunit subfamily. In terms of assembly, the glycine cleavage system is composed of four proteins: P, T, L and H. In this organism, the P 'protein' is a heterodimer of two subunits. Requires pyridoxal 5'-phosphate as cofactor.

The catalysed reaction is N(6)-[(R)-lipoyl]-L-lysyl-[glycine-cleavage complex H protein] + glycine + H(+) = N(6)-[(R)-S(8)-aminomethyldihydrolipoyl]-L-lysyl-[glycine-cleavage complex H protein] + CO2. Functionally, the glycine cleavage system catalyzes the degradation of glycine. The P protein binds the alpha-amino group of glycine through its pyridoxal phosphate cofactor; CO(2) is released and the remaining methylamine moiety is then transferred to the lipoamide cofactor of the H protein. The sequence is that of Probable glycine dehydrogenase (decarboxylating) subunit 2 from Thermococcus kodakarensis (strain ATCC BAA-918 / JCM 12380 / KOD1) (Pyrococcus kodakaraensis (strain KOD1)).